Here is a 197-residue protein sequence, read N- to C-terminus: MATSSLSTIVFSPLALSNSSSFPNKPQVSNLSLHSSLSNLRRTLSHSSPSSSSSSNVRVFAAPEVLESQETGPESYVEEGSETSALGIGADSDQMAPKQKIRIKLRSYWVPLIEDSCKQIMDAARTTNAKTMGPVPLPTKKRIFCVLKSPHVHKDARFHFEIRTHQRLIDILYPTAQTIDSLMQLDLPAGVDVEVKL.

The transit peptide at 1–60 (MATSSLSTIVFSPLALSNSSSFPNKPQVSNLSLHSSLSNLRRTLSHSSPSSSSSSNVRVF) directs the protein to the chloroplast. Residues 67–91 (ESQETGPESYVEEGSETSALGIGAD) are disordered.

The protein belongs to the universal ribosomal protein uS10 family. As to quaternary structure, part of the 30S ribosomal subunit.

It localises to the plastid. The protein resides in the chloroplast. In Mesembryanthemum crystallinum (Common ice plant), this protein is Small ribosomal subunit protein uS10c (RPS10).